The primary structure comprises 339 residues: Ketol-acid reductoisomerase (NADP(+)) (339 aa).

Residues 1-182 form the KARI N-terminal Rossmann domain; that stretch reads MPNRYYEKDG…GCLKAGVIDT (182 aa). NADP(+) contacts are provided by residues 25-28, Ser51, Ser53, and 83-86; these read YGSQ and DHIQ. Residue His108 is part of the active site. Residue Gly134 coordinates NADP(+). In terms of domain architecture, KARI C-terminal knotted spans 183-328; it reads NFREETESDL…RELREMMTFL (146 aa). Residues Asp191, Glu195, Glu227, and Glu231 each coordinate Mg(2+). Ser252 serves as a coordination point for substrate.

It belongs to the ketol-acid reductoisomerase family. It depends on Mg(2+) as a cofactor.

It catalyses the reaction (2R)-2,3-dihydroxy-3-methylbutanoate + NADP(+) = (2S)-2-acetolactate + NADPH + H(+). It carries out the reaction (2R,3R)-2,3-dihydroxy-3-methylpentanoate + NADP(+) = (S)-2-ethyl-2-hydroxy-3-oxobutanoate + NADPH + H(+). It functions in the pathway amino-acid biosynthesis; L-isoleucine biosynthesis; L-isoleucine from 2-oxobutanoate: step 2/4. It participates in amino-acid biosynthesis; L-valine biosynthesis; L-valine from pyruvate: step 2/4. In terms of biological role, involved in the biosynthesis of branched-chain amino acids (BCAA). Catalyzes an alkyl-migration followed by a ketol-acid reduction of (S)-2-acetolactate (S2AL) to yield (R)-2,3-dihydroxy-isovalerate. In the isomerase reaction, S2AL is rearranged via a Mg-dependent methyl migration to produce 3-hydroxy-3-methyl-2-ketobutyrate (HMKB). In the reductase reaction, this 2-ketoacid undergoes a metal-dependent reduction by NADPH to yield (R)-2,3-dihydroxy-isovalerate. This Solibacter usitatus (strain Ellin6076) protein is Ketol-acid reductoisomerase (NADP(+)).